Consider the following 801-residue polypeptide: Squamosa promoter-binding-like protein 7 (801 aa).

Disordered regions lie at residues methionine 1–aspartate 23 and serine 59–arginine 91. The SBP-type; atypical zinc finger occupies valine 135–lysine 212. Residues cysteine 138, cysteine 143, cysteine 160, cysteine 163, cysteine 179, cysteine 182, histidine 186, and cysteine 198 each contribute to the Zn(2+) site. The Bipartite nuclear localization signal signature appears at lysine 195–arginine 211. The span at glutamate 203–proline 213 shows a compositional bias: basic residues. Disordered stretches follow at residues glutamate 203–isoleucine 258 and glycine 286–alanine 313. A compositionally biased stretch (polar residues) spans glutamate 222 to serine 233. The segment covering glutamine 249–isoleucine 258 has biased composition (basic and acidic residues). Residues serine 304–alanine 313 show a composition bias toward polar residues.

Homodimer. Interacts with KIN17. Interacts with HY5. The cofactor is Zn(2+). In terms of tissue distribution, expressed in roots rosette leaves, cauline leaves, stems, flowers and siliques.

Its subcellular location is the nucleus speckle. Transcription factor that participates in reprogramming global gene expression during copper deficiency in order to improve the metal uptake and prioritize its distribution to copper proteins of major importance. Binds directly to 5'-GTAC-3' motifs in the microRNA (miRNA) promoter of the stress-responsive miRNAs miR398b and miR398c to activate their transcription. During copper deficiency, activates the copper transporters COPT1 and COPT2, and the copper chaperone CCH, directly or indirectly via miRNAs. Required for the expression of the miRNAs miR397, miR408 and miR857. Acts coordinately with HY5 to regulate miR408 and its target genes in response to changes in light and copper conditions. Activates miR857 and its target genes in response to low copper conditions. Involved in cadmium stress response by regulating miR397a, miR398b, miR398c and miR857. Required for iron homeostasis during copper deficiency. This is Squamosa promoter-binding-like protein 7 (SPL7) from Arabidopsis thaliana (Mouse-ear cress).